The primary structure comprises 439 residues: Methionine aminopeptidase 2-2 (439 aa).

Residues 1–90 are disordered; the sequence is MAAQTTEKLD…RVPVSNLFPN (90 aa). Residues 28–41 show a composition bias toward acidic residues; the sequence is EAEEDSDDAQDEGA. The span at 56–72 shows a compositional bias: basic residues; that stretch reads KKKKKKKPKKKSKKKGG. Histidine 196 provides a ligand contact to substrate. Residues aspartate 216, aspartate 227, and histidine 296 each contribute to the a divalent metal cation site. Histidine 304 serves as a coordination point for substrate. Residues glutamate 329 and glutamate 424 each coordinate a divalent metal cation.

This sequence belongs to the peptidase M24A family. Methionine aminopeptidase eukaryotic type 2 subfamily. It depends on Co(2+) as a cofactor. Requires Zn(2+) as cofactor. The cofactor is Mn(2+). Fe(2+) serves as cofactor.

Its subcellular location is the cytoplasm. It carries out the reaction Release of N-terminal amino acids, preferentially methionine, from peptides and arylamides.. In terms of biological role, cotranslationally removes the N-terminal methionine from nascent proteins. The N-terminal methionine is often cleaved when the second residue in the primary sequence is small and uncharged (Met-Ala-, Cys, Gly, Pro, Ser, Thr, or Val). The chain is Methionine aminopeptidase 2-2 from Penicillium rubens (strain ATCC 28089 / DSM 1075 / NRRL 1951 / Wisconsin 54-1255) (Penicillium chrysogenum).